Here is a 202-residue protein sequence, read N- to C-terminus: MAGTDWLSARRTELAADRILDAAERLFTQRDPASIGMNEIAKAAGCSRATLYRYFDSREALRTAYVHRETRRLGREIMVKIADVVEPAERLLVSITTTLRMVRDNPALAAWFTTTRPPIGGEMAGRSEVIAALAAAFLNSLGPDDPTTVERRARWVVRMLTSLLMFPGRDEADERAMIAEFVVPIVTPASAAARKAGHPGPE.

In terms of domain architecture, HTH tetR-type spans 13-73; sequence ELAADRILDA…AYVHRETRRL (61 aa). Residues 36-55 constitute a DNA-binding region (H-T-H motif); it reads GMNEIAKAAGCSRATLYRYF.

This is an uncharacterized protein from Mycobacterium tuberculosis (strain CDC 1551 / Oshkosh).